Here is a 251-residue protein sequence, read N- to C-terminus: uncharacterized protein (251 aa).

Disordered stretches follow at residues 1–92 and 137–251; these read MGRP…PGSA and KPTP…LRTH. Over residues 69 to 92 the composition is skewed to low complexity; sequence AEGAPALLGGSPSSGSPGHPPGSA. Residues 155–172 are compositionally biased toward polar residues; the sequence is SESSWQLPQLPAGSTSGS.

This is an uncharacterized protein from Homo sapiens (Human).